Here is a 696-residue protein sequence, read N- to C-terminus: MTEIFGKLHRSSNSENTNQASPSTIQSHSTQPVLSNDHSTKVNDYEGKEGASSNGYDPVFMSDRMKMRYNEITAQLHKEQSLKEDKESGSNSSESNGITPMGTYSEKPKLLQSRTPPSSCYIRHDTVVPKDKNGQHAFGRLYVRLHQGRDLNVKSVNAQPYAVITFEKTQVMVPPPFKDIDGGIPISIPSKNRPLAGSASGSSSGLHSELMLADVRCPHWDFETVFDVTKMKSQMVVSVYDKYEDDKFLGSVKITPIFLHEYVQEAWYKLEPLDLTKSLEGEIKVETIYEHIEHVRYGPEDFTALRLIGKGTFGQVYLVRKNDTNRIYAMKKISKKLIVRKKEVTHTLGERNILVRTSLDESPFIVGLKFSFQTASDLYLITDYMSGGELFWHLQHEGRFPEQRAKFYIAELVLALEHLHKHDIIYRDLKPENILLDADGHIALCDFGLSKANLSANATTNTFCGTTEYLAPEVLLEDKGYTKQVDFWSLGVLVFEMCCGWSPFYAPDVQQMYRNIAFGKVRFPKGVLSSEGRSFVRGLLNRNPNHRLGAVADTTELKEHPFFADINWDLLSKKKVQPPFKPNVQNDLDVSNFDKEFTNTNVKNINIVSNVDPANASTPLSNTIQDRFRGFTFVNKSIDEQFQNLGLQENEETDNLHACRTTTHSSVNSINSHGNPRTVDANDPVADTVFGETFEA.

2 disordered regions span residues 1 to 59 and 77 to 118; these read MTEI…YDPV and HKEQ…TPPS. The segment covering 11-37 has biased composition (polar residues); that stretch reads SSNSENTNQASPSTIQSHSTQPVLSND. Composition is skewed to basic and acidic residues over residues 38–49 and 77–88; these read HSTKVNDYEGKE and HKEQSLKEDKES. One can recognise a C2 domain in the interval 122–272; sequence IRHDTVVPKD…VQEAWYKLEP (151 aa). In terms of domain architecture, Protein kinase spans 302–563; that stretch reads FTALRLIGKG…TTELKEHPFF (262 aa). Residues 308 to 316 and Lys-331 contribute to the ATP site; that span reads IGKGTFGQV. The active-site Proton acceptor is Asp-428. The region spanning 564-643 is the AGC-kinase C-terminal domain; sequence ADINWDLLSK…VNKSIDEQFQ (80 aa). Thr-632 bears the Phosphothreonine mark. Phosphoserine is present on Ser-665.

It belongs to the protein kinase superfamily. AGC Ser/Thr protein kinase family. cAMP subfamily.

The enzyme catalyses L-seryl-[protein] + ATP = O-phospho-L-seryl-[protein] + ADP + H(+). It carries out the reaction L-threonyl-[protein] + ATP = O-phospho-L-threonyl-[protein] + ADP + H(+). Protein kinase that is part of growth control pathway which is at least partially redundant with the cAMP pathway. Required for trehalase activation. The polypeptide is Serine/threonine-protein kinase sck1 (sck1) (Schizosaccharomyces pombe (strain 972 / ATCC 24843) (Fission yeast)).